Reading from the N-terminus, the 138-residue chain is Large ribosomal subunit protein bL17 (138 aa).

It belongs to the bacterial ribosomal protein bL17 family. Part of the 50S ribosomal subunit. Contacts protein L32.

The chain is Large ribosomal subunit protein bL17 from Nitrobacter winogradskyi (strain ATCC 25391 / DSM 10237 / CIP 104748 / NCIMB 11846 / Nb-255).